We begin with the raw amino-acid sequence, 230 residues long: Claudin-2 (230 aa).

Residues 1–7 (MASLGVQ) are Cytoplasmic-facing. Residues 8 to 28 (LVGYILGLLGLLGTSIAMLLP) traverse the membrane as a helical segment. At 29-81 (NWRTSSYVGASIVTAVGFSKGLWMECATHSTGITQCDIYSTLLGLPADIQAAQ) the chain is on the extracellular side. A disulfide bridge links cysteine 54 with cysteine 64. A helical membrane pass occupies residues 82–102 (AMMVTSSAMSSLACIISVVGM). Residues 103–116 (RCTVFCQDSRAKDR) lie on the Cytoplasmic side of the membrane. Residues 117–137 (VAVVGGVFFILGGILGFIPVA) form a helical membrane-spanning segment. The Extracellular portion of the chain corresponds to 138 to 162 (WNLHGILRDFYSPLVPDSMKFEIGE). A helical transmembrane segment spans residues 163 to 183 (ALYLGIISALFSLVAGVILCF). Over 184–230 (SCSPQGNRTNYYDGYQAQPLATRSSPRSAQQPKAKSEFNSYSLTGYV) the chain is Cytoplasmic. Residues 205-230 (TRSSPRSAQQPKAKSEFNSYSLTGYV) are disordered. Lysine 218 participates in a covalent cross-link: Glycyl lysine isopeptide (Lys-Gly) (interchain with G-Cter in SUMO). Serine 219 and serine 223 each carry phosphoserine. Residues 229 to 230 (YV) form an interactions with TJP1, TJP2 and TJP3 region.

It belongs to the claudin family. In terms of assembly, can form homo- and heteropolymers with other claudins to mediate paracellular barrier and channel functions of tight junctions in response to physiological stimuli. Homopolymers interact with CLDN3, but not CLDN1, homopolymers. Directly interacts with TJP1/ZO-1, TJP2/ZO-2 and TJP3/ZO-3. The disulfide bond is necessary for pore formation, but is not required for correct protein trafficking. As to expression, expressed in the kidney, liver and intestine, with higher levels in the ileum than in the jejunum. Low levels in the brain. Expressed in colonic epithelium (at protein level). Expressed in the perivenous regions, bile ducts, and gallbladder epithelium (at protein level).

It localises to the cell junction. Its subcellular location is the tight junction. The protein localises to the cell membrane. The enzyme catalyses Na(+)(in) = Na(+)(out). The catalysed reaction is K(+)(in) = K(+)(out). It catalyses the reaction Rb(+)(in) = Rb(+)(out). It carries out the reaction Li(+)(in) = Li(+)(out). The enzyme catalyses Cs(+)(in) = Cs(+)(out). The catalysed reaction is Ca(2+)(in) = Ca(2+)(out). It catalyses the reaction methylamine(out) = methylamine(in). It carries out the reaction choline(out) = choline(in). The enzyme catalyses H2O(in) = H2O(out). The channel permeability is down-regulated at acidic pH. Forms paracellular channels: polymerizes in tight junction strands with cation- and water-selective channels through the strands, conveying epithelial permeability in a process known as paracellular tight junction permeability. In intestinal epithelium, allows for sodium and water fluxes from the peritoneal side to the lumen of the intestine to regulate nutrient absorption and clear enteric pathogens as part of mucosal immune response. In kidney, allows passive sodium and calcium reabsorption across proximal tubules from the lumen back to the bloodstream. In the hepatobiliary tract, allows paracellular water and cation fluxes in the hepatic perivenous areas and biliary epithelium to generate bile flow and maintain osmotic gradients. The polypeptide is Claudin-2 (Mus musculus (Mouse)).